A 292-amino-acid polypeptide reads, in one-letter code: 2-(5''-triphosphoribosyl)-3'-dephosphocoenzyme-A synthase (292 aa).

This sequence belongs to the CitG/MdcB family.

It carries out the reaction 3'-dephospho-CoA + ATP = 2'-(5''-triphospho-alpha-D-ribosyl)-3'-dephospho-CoA + adenine. In terms of biological role, catalyzes the formation of 2-(5''-triphosphoribosyl)-3'-dephosphocoenzyme-A, the precursor of the prosthetic group of the holo-acyl carrier protein (gamma chain) of citrate lyase, from ATP and dephospho-CoA. This chain is 2-(5''-triphosphoribosyl)-3'-dephosphocoenzyme-A synthase, found in Escherichia coli (strain SMS-3-5 / SECEC).